We begin with the raw amino-acid sequence, 201 residues long: FMN-dependent NADH:quinone oxidoreductase (201 aa).

Residues serine 10, 16-18 (SQS), 96-99 (MYNF), and 140-143 (SRGG) each bind FMN.

The protein belongs to the azoreductase type 1 family. In terms of assembly, homodimer. Requires FMN as cofactor.

The catalysed reaction is 2 a quinone + NADH + H(+) = 2 a 1,4-benzosemiquinone + NAD(+). It carries out the reaction N,N-dimethyl-1,4-phenylenediamine + anthranilate + 2 NAD(+) = 2-(4-dimethylaminophenyl)diazenylbenzoate + 2 NADH + 2 H(+). Functionally, quinone reductase that provides resistance to thiol-specific stress caused by electrophilic quinones. Its function is as follows. Also exhibits azoreductase activity. Catalyzes the reductive cleavage of the azo bond in aromatic azo compounds to the corresponding amines. This Escherichia coli O6:K15:H31 (strain 536 / UPEC) protein is FMN-dependent NADH:quinone oxidoreductase.